Reading from the N-terminus, the 362-residue chain is Glutamine synthetase (362 aa).

A GS beta-grasp domain is found at 26–107; that stretch reads LIAEYIWIDS…VLSECWNADG (82 aa). One can recognise a GS catalytic domain in the interval 114–362; the sequence is HRHEAAKLME…METCFGAVSE (249 aa).

The protein belongs to the glutamine synthetase family. In terms of assembly, homooctamer.

The protein resides in the cytoplasm. The enzyme catalyses L-glutamate + NH4(+) + ATP = L-glutamine + ADP + phosphate + H(+). This is Glutamine synthetase (gln-1) from Neurospora crassa (strain ATCC 24698 / 74-OR23-1A / CBS 708.71 / DSM 1257 / FGSC 987).